A 479-amino-acid chain; its full sequence is Glutamate--tRNA ligase 2 (479 aa).

Positions 10–20 (PSPTGSLHIGG) match the 'HIGH' region motif. The 'KMSKS' region signature appears at 243–247 (KLSKR). K246 is a binding site for ATP.

Belongs to the class-I aminoacyl-tRNA synthetase family. Glutamate--tRNA ligase type 1 subfamily. Monomer.

The protein localises to the cytoplasm. It carries out the reaction tRNA(Glu) + L-glutamate + ATP = L-glutamyl-tRNA(Glu) + AMP + diphosphate. Functionally, catalyzes the attachment of glutamate to tRNA(Glu) in a two-step reaction: glutamate is first activated by ATP to form Glu-AMP and then transferred to the acceptor end of tRNA(Glu). The polypeptide is Glutamate--tRNA ligase 2 (Thermoanaerobacter pseudethanolicus (strain ATCC 33223 / 39E) (Clostridium thermohydrosulfuricum)).